An 804-amino-acid polypeptide reads, in one-letter code: G-type lectin S-receptor-like serine/threonine-protein kinase At1g61490 (804 aa).

The N-terminal stretch at 1-24 (MGKKRIVFFACLLLFTVLLRFSYA) is a signal peptide. The Bulb-type lectin domain occupies 25-144 (GITTESPLSV…ASGRTLWESF (120 aa)). Topologically, residues 25–425 (GITTESPLSV…SELGGNKRNK (401 aa)) are extracellular. Residues N53, N94, N117, N134, N236, and N267 are each glycosylated (N-linked (GlcNAc...) asparagine). The EGF-like domain maps to 278–314 (PANSCDIYGVCGPFGLCIVSVPLKCKCLKGFVPHSTE). 2 cysteine pairs are disulfide-bonded: C282-C294 and C288-C302. N-linked (GlcNAc...) asparagine glycosylation is found at N320, N336, and N375. Positions 333 to 415 (CQGNSTGKDV…GEILSIRLAH (83 aa)) constitute a PAN domain. Disulfide bonds link C368/C389 and C372/C378. The helical transmembrane segment at 426–446 (IIVASTVSLSLFVILTSAAFG) threads the bilayer. The Cytoplasmic portion of the chain corresponds to 447-804 (FWRYRVKHKA…EMTQSMILGR (358 aa)). The Protein kinase domain maps to 490–775 (FSLSNKLGQG…DLPSPKQPTF (286 aa)). ATP-binding positions include 496–504 (LGQGGFGSV) and K518. Phosphoserine is present on residues S524 and S539. The tract at residues 579-596 (RKKLEVDWPKRFDIVQGI) is caM-binding. The active-site Proton acceptor is D615. A phosphoserine mark is found at S619 and S632. Position 649 is a phosphothreonine (T649). S692 carries the phosphoserine modification.

This sequence belongs to the protein kinase superfamily. Ser/Thr protein kinase family.

It localises to the cell membrane. The enzyme catalyses L-seryl-[protein] + ATP = O-phospho-L-seryl-[protein] + ADP + H(+). It carries out the reaction L-threonyl-[protein] + ATP = O-phospho-L-threonyl-[protein] + ADP + H(+). The polypeptide is G-type lectin S-receptor-like serine/threonine-protein kinase At1g61490 (Arabidopsis thaliana (Mouse-ear cress)).